A 416-amino-acid polypeptide reads, in one-letter code: MLSAADFDPKPRRASVAVDVGGVIVGGGAPVVVQSMTNTDTADIDSTVAQVAALHRAGSELVRITVDRDESAAAVPKIRERLLRLGMDVPLIGDFHYIGHKLLADHPDCAEALAKYRINPGNVGFKDKKDKQFAEIIEMAIRYDKPVRIGVNWGSLDQDLLTALMDRNAEAGSPLSARQVTREAIVQSALLSAALAEEIGLPRNRIILSAKVSQVQDLIAVNSILAERSNHALHLGLTEAGMGTKGIVASSAAMGFVLQHGIGDTIRVSLTPEPNGDRTREVQVAQEILQVMGFRQFIPVVAACPGCGRTTSTVFQELAQNIQNDIRKNMPVWREKYPGVEALNVAVMGCIVNGPGESKHADIGISLPGTGETPAAPVFIDGRKALTLRGPNIAADFEALVVDYIEKRFGQRTAAE.

[4Fe-4S] cluster contacts are provided by cysteine 304, cysteine 307, cysteine 350, and glutamate 357.

It belongs to the IspG family. The cofactor is [4Fe-4S] cluster.

The enzyme catalyses (2E)-4-hydroxy-3-methylbut-2-enyl diphosphate + oxidized [flavodoxin] + H2O + 2 H(+) = 2-C-methyl-D-erythritol 2,4-cyclic diphosphate + reduced [flavodoxin]. The protein operates within isoprenoid biosynthesis; isopentenyl diphosphate biosynthesis via DXP pathway; isopentenyl diphosphate from 1-deoxy-D-xylulose 5-phosphate: step 5/6. Converts 2C-methyl-D-erythritol 2,4-cyclodiphosphate (ME-2,4cPP) into 1-hydroxy-2-methyl-2-(E)-butenyl 4-diphosphate. In Rhizobium johnstonii (strain DSM 114642 / LMG 32736 / 3841) (Rhizobium leguminosarum bv. viciae), this protein is 4-hydroxy-3-methylbut-2-en-1-yl diphosphate synthase (flavodoxin).